The sequence spans 115 residues: Double-headed protease inhibitor, submandibular gland (115 aa).

2 consecutive Kazal-like domains span residues 6–66 (IGRE…ACDI) and 67–115 (ECTE…HGEC). 6 disulfides stabilise this stretch: cysteine 12-cysteine 46, cysteine 24-cysteine 43, cysteine 32-cysteine 64, cysteine 68-cysteine 97, cysteine 75-cysteine 94, and cysteine 83-cysteine 115.

It localises to the secreted. Functionally, this inhibitor is composed of two homologous actively inhibiting halves: one which inhibits trypsin, the other which inhibits elastase. The protein is Double-headed protease inhibitor, submandibular gland of Canis lupus familiaris (Dog).